Reading from the N-terminus, the 144-residue chain is Putative pre-16S rRNA nuclease (144 aa).

Belongs to the YqgF nuclease family.

Its subcellular location is the cytoplasm. In terms of biological role, could be a nuclease involved in processing of the 5'-end of pre-16S rRNA. The polypeptide is Putative pre-16S rRNA nuclease (Acaryochloris marina (strain MBIC 11017)).